The sequence spans 363 residues: Protein-arginine kinase (363 aa).

Positions 24–254 (IVLSSRIRLA…AQLIEQERSA (231 aa)) constitute a Phosphagen kinase C-terminal domain. 27-31 (SSRIR) lines the ATP pocket. 3 positions are modified to phosphoarginine; by autocatalysis: R29, R40, and R86. ATP-binding positions include H92, R125, and 176–180 (RASVM). R190 carries the post-translational modification Phosphoarginine; by autocatalysis. Residue 207–212 (RGIYGE) coordinates ATP. 3 positions are modified to phosphoarginine; by autocatalysis: R255, R269, and R272. The RDXXRA motif of the pArg binding pocket involved in allosteric regulation motif lies at 337-342 (RDIRRA). The residue at position 346 (R346) is a Phosphoarginine; by autocatalysis.

Belongs to the ATP:guanido phosphotransferase family. Interacts with CtsR in its autophosphorylated form. Interacts with McsA in nonstressed as well as in heat-stressed cells, whereas strongly interacts with ClpC only in nonstressed cells. Post-translationally, autophosphorylated on Arg residues. Phosphorylation on Arg-40 and Arg-86 are up-regulated upon stress conditions.

Its subcellular location is the cytoplasm. It catalyses the reaction L-arginyl-[protein] + ATP = N(omega)-phospho-L-arginyl-[protein] + ADP + H(+). With respect to regulation, appears to be allosterically activated by the binding of pArg-containing polypeptides to the pArg-binding pocket localized in the C-terminal domain of McsB. The McsB kinase is inhibited in nonstressed cells by direct interaction with ClpC; upon heat exposure, the interaction of McsB with ClpC is dramatically decreased, leading to McsB release and activation during heat stress. Its kinase activity is counteracted by the protein-arginine-phosphatase YwlE in vivo. Requires McsA for full kinase activity. In terms of biological role, catalyzes the specific phosphorylation of arginine residues in a large number of proteins. Is part of the bacterial stress response system, where it is involved in regulating the global heat shock repressor CtsR; phosphorylates arginine residues in the winged helix-turn-helix domain of CtsR, thereby preventing its binding to DNA and consequently inducing the expression of repressed genes. The transcriptional repressor HrcA, the chaperone GroEL, the unfoldase ClpC, together with several ribosomal subunits, represent other physiological targets of McsB under stress conditions. Protein arginine phosphorylation has a physiologically important role and is involved in the regulation of many critical cellular processes, such as protein homeostasis, motility, competence, and stringent and stress responses, by regulating gene expression and protein activity. Functions as an adapter whose kinase activity is required for ClpCP-mediated degradation of CtsR during heat stress. Is required for the delocalization of competence proteins from the cell poles, probably via a role in the degradation of anchor proteins. The sequence is that of Protein-arginine kinase from Bacillus subtilis (strain 168).